A 476-amino-acid chain; its full sequence is NADH-quinone oxidoreductase subunit N (476 aa).

Helical transmembrane passes span 10-30 (AVLP…IGAI), 42-62 (LAIA…AVTI), 77-97 (FMKV…VDWL), 108-128 (AVLV…GDLI), 129-149 (ALYL…AINR), 162-182 (FVLG…IYGF), 202-222 (LVFG…AVPF), 234-254 (PTPV…AVFV), 268-288 (WQQI…FAAI), 296-316 (LLAY…AAGT), 323-343 (VLLY…CVLA), 368-388 (ALAL…AGFV), 392-412 (YVFL…GVVA), and 445-465 (AVLA…TPLI).

The protein belongs to the complex I subunit 2 family. NDH-1 is composed of 14 different subunits. Subunits NuoA, H, J, K, L, M, N constitute the membrane sector of the complex.

The protein localises to the cell inner membrane. It carries out the reaction a quinone + NADH + 5 H(+)(in) = a quinol + NAD(+) + 4 H(+)(out). Its function is as follows. NDH-1 shuttles electrons from NADH, via FMN and iron-sulfur (Fe-S) centers, to quinones in the respiratory chain. The immediate electron acceptor for the enzyme in this species is believed to be ubiquinone. Couples the redox reaction to proton translocation (for every two electrons transferred, four hydrogen ions are translocated across the cytoplasmic membrane), and thus conserves the redox energy in a proton gradient. This chain is NADH-quinone oxidoreductase subunit N, found in Azorhizobium caulinodans (strain ATCC 43989 / DSM 5975 / JCM 20966 / LMG 6465 / NBRC 14845 / NCIMB 13405 / ORS 571).